A 480-amino-acid polypeptide reads, in one-letter code: Proline--tRNA ligase (480 aa).

This sequence belongs to the class-II aminoacyl-tRNA synthetase family. ProS type 3 subfamily. As to quaternary structure, homodimer.

The protein resides in the cytoplasm. It carries out the reaction tRNA(Pro) + L-proline + ATP = L-prolyl-tRNA(Pro) + AMP + diphosphate. Its function is as follows. Catalyzes the attachment of proline to tRNA(Pro) in a two-step reaction: proline is first activated by ATP to form Pro-AMP and then transferred to the acceptor end of tRNA(Pro). The polypeptide is Proline--tRNA ligase (Pyrococcus abyssi (strain GE5 / Orsay)).